The sequence spans 363 residues: Putative agmatine deiminase 1 (363 aa).

Catalysis depends on C356, which acts as the Amidino-cysteine intermediate.

The protein belongs to the agmatine deiminase family.

The catalysed reaction is agmatine + H2O = N-carbamoylputrescine + NH4(+). The polypeptide is Putative agmatine deiminase 1 (Listeria monocytogenes serovar 1/2a (strain ATCC BAA-679 / EGD-e)).